The primary structure comprises 639 residues: Protein zwilch homolog (639 aa).

Residues 76–95 (QKTSSLLNRRENKKTIKSEK) show a composition bias toward basic and acidic residues. Residues 76–116 (QKTSSLLNRRENKKTIKSEKEDESMDMETAEGDKENTVSET) form a disordered region. Positions 96–105 (EDESMDMETA) are enriched in acidic residues.

The protein belongs to the ZWILCH family. Component of the RZZ complex composed of rod-1, czw-1 and zwl-1. Interacts with the spindly-like protein spdl-1. Interacts with NDC80 complex component ndc-80.

The protein localises to the cytoplasm. The protein resides in the cell cortex. Its subcellular location is the chromosome. It localises to the centromere. It is found in the kinetochore. The protein localises to the cytoskeleton. The protein resides in the spindle. Essential component of the mitotic checkpoint, which prevents cells from prematurely exiting mitosis. Required for chromosome segregation, the assembly of the dynein-dynactin and mdf-1-mdf-2 complexes onto kinetochores and spindle pole separation. Its function related to the spindle assembly machinery and kinetochore-microtubule attachments likely depends on its association in the mitotic RZZ complex. The RZZ complex recruits the spindly-like protein spdl-1 to kinetochores. To prevent irregular chromosome segregation, the complex also inhibits the attachment of the kinetochore-associated NDC80 complex to microtubules. The recruitment of spdl-1 to kinetochores relieves this inhibition. Required for embryonic development. The sequence is that of Protein zwilch homolog (zwl-1) from Caenorhabditis briggsae.